Consider the following 452-residue polypeptide: Probable mannose-6-phosphate isomerase (452 aa).

Positions 141, 143, 168, and 295 each coordinate Zn(2+). The active site involves arginine 314.

The protein belongs to the mannose-6-phosphate isomerase type 1 family. Requires Zn(2+) as cofactor.

It is found in the cytoplasm. It catalyses the reaction D-mannose 6-phosphate = D-fructose 6-phosphate. It functions in the pathway nucleotide-sugar biosynthesis; GDP-alpha-D-mannose biosynthesis; alpha-D-mannose 1-phosphate from D-fructose 6-phosphate: step 1/2. Its function is as follows. Involved in the synthesis of the GDP-mannose and dolichol-phosphate-mannose required for a number of critical mannosyl transfer reactions. In Dictyostelium discoideum (Social amoeba), this protein is Probable mannose-6-phosphate isomerase (mpi).